A 632-amino-acid polypeptide reads, in one-letter code: Nucleoside triphosphatase I (632 aa).

The Helicase ATP-binding domain maps to 42–204 (FLGLDKMHSL…VMLVNLLRPK (163 aa)). Residue 55–62 (HETGVGKT) coordinates ATP. Positions 141-144 (DECH) match the DEXH box motif. In terms of domain architecture, Helicase C-terminal spans 367–532 (KFTDVCLRIL…EFTQLFKVFK (166 aa)). A binding to the cap-specific mRNA (nucleoside-2'-O-)-methyltransferase region spans residues 457–524 (DIFILDMTWN…DIIRTKSKEF (68 aa)).

Belongs to the helicase family. NPH I subfamily. Monomer. Interacts (via C-terminus) with RAP94 (via N-terminus). Interacts with the cap-specific mRNA (nucleoside-2'-O-)-methyltransferase.

It localises to the virion. It carries out the reaction a ribonucleoside 5'-triphosphate + H2O = a ribonucleoside 5'-diphosphate + phosphate + H(+). In terms of biological role, DNA-dependent ATPase required for providing the needed energy to achieve the termination of early transcripts. Acts in concert with the RAP94 subunit of the virion RNA polymerase and the capping enzyme/VTF to catalyze release of UUUUUNU-containing nascent RNA from the elongation complex. NPH-I must bind ssDNA in order to exhibit ATPase activity. This chain is Nucleoside triphosphatase I (NPH1), found in Myxoma virus (strain Lausanne) (MYXV).